Here is a 902-residue protein sequence, read N- to C-terminus: 3'-5' exonuclease DinG (902 aa).

The region spanning valine 8–leucine 161 is the Exonuclease domain. The Helicase ATP-binding domain occupies lysine 241 to arginine 496. Alanine 276 to serine 283 contributes to the ATP binding site. Residues aspartate 448–histidine 451 carry the DEAH box motif. The 170-residue stretch at tyrosine 714–lysine 883 folds into the Helicase C-terminal domain.

It belongs to the helicase family. DinG subfamily. Type 2 sub-subfamily.

Functionally, 3'-5' exonuclease. This Staphylococcus epidermidis (strain ATCC 35984 / DSM 28319 / BCRC 17069 / CCUG 31568 / BM 3577 / RP62A) protein is 3'-5' exonuclease DinG.